Reading from the N-terminus, the 707-residue chain is Choline transporter-like protein 4 (707 aa).

Over 1 to 33 (MGGKQDQDKEAYGKPAKYDPSFRGPIRNRSCTD) the chain is Cytoplasmic. Residues 34-54 (IICCVLFFLFILGYIAVGILA) form a helical membrane-spanning segment. At 55–227 (WVYGDPKQVL…KIFEDFAQSW (173 aa)) the chain is on the extracellular side. Residues N68, N185, and N196 are each glycosylated (N-linked (GlcNAc...) asparagine). A helical transmembrane segment spans residues 228–248 (YWILIALGLALVLSLLFILLL). Residues 249–250 (RL) are Cytoplasmic-facing. A helical transmembrane segment spans residues 251–271 (VAGPLVFVLIIGVLGVLAYGI). Residues 272-307 (YHCWEEYRVLRDKGASISQLGFTTNLSAYRNVQETW) lie on the Extracellular side of the membrane. N-linked (GlcNAc...) asparagine glycosylation is present at N296. The chain crosses the membrane as a helical span at residues 308-328 (LAALIILAVLEGVLLLMLIFL). Residues 329–356 (RQRICIAIALLKEASRAVGYIMSTMFYP) are Cytoplasmic-facing. A helical membrane pass occupies residues 357–377 (LVTFALLLVCIAYWAIIALFL). Topologically, residues 378–452 (ATSGQPQYVF…AVLGLFWTIN (75 aa)) are extracellular. Residues N391, N403, and N413 are each glycosylated (N-linked (GlcNAc...) asparagine). A helical membrane pass occupies residues 453–473 (WVLALGQCVLAGAFASFYWAF). At 474–498 (HKPRDIPTFPLGSAFLRTLRYHTGS) the chain is on the cytoplasmic side. The chain crosses the membrane as a helical span at residues 499 to 519 (LAFGALILTLVQIARVILEYI). At 520–557 (DHKLRGAQNPLTRCILCCFKCCLWCLEKFIKFLNRNAY) the chain is on the extracellular side. Residues 558 to 578 (IMIAIYGKNFCVSAKNAFMLL) traverse the membrane as a helical segment. Residues 579-594 (MRNIVRVVVLDKVTDL) are Cytoplasmic-facing. Residues 595 to 615 (LLFFGKLLVVGGVGVLSFFFF) form a helical membrane-spanning segment. The Extracellular portion of the chain corresponds to 616-635 (TGRIPSLGKTFENPQLNYYW). A helical membrane pass occupies residues 636–656 (LPIMVSILGAYLIASGFFSVF). The Cytoplasmic portion of the chain corresponds to 657–707 (GMCVDTLFLCFLEDLERNDGSADRPYYMSKSLLKILGKKNKGTPGDKKRKK).

Belongs to the CTL (choline transporter-like) family. In terms of processing, N-glycosylated; N-glycosylation of Asn-68 and Asn-391 is required for a proper thiamine pyrophosphate uptake.

It localises to the membrane. It is found in the apical cell membrane. The catalysed reaction is choline(out) + n H(+)(in) = choline(in) + n H(+)(out). The enzyme catalyses thiamine diphosphate(out) = thiamine diphosphate(in). In terms of biological role, choline transporter that plays a role in the choline-acetylcholine system and is required to the efferent innervation of hair cells in the olivocochlear bundle for the maintenance of physiological function of outer hair cells and the protection of hair cells from acoustic injury. Also described as a thiamine pyrophosphate transporter in colon, may mediate the absorption of microbiota-generated thiamine pyrophosphate and contribute to host thiamine (vitamin B1) homeostasis. This is Choline transporter-like protein 4 from Bos taurus (Bovine).